The chain runs to 109 residues: MKLSIIIIATSLVIAVVAFPSKDSKAIENDKTEQRMEIVVQETARACSKQIGDKCKRNCECYGKTVVCGTIYVGGKEVNQCMDKTSDSAILNGLGKGMNFIENTFSFCV.

Residues 1–18 (MKLSIIIIATSLVIAVVA) form the signal peptide. The propeptide occupies 19–46 (FPSKDSKAIENDKTEQRMEIVVQETARA). 3 disulfides stabilise this stretch: Cys-55–Cys-68, Cys-59–Cys-108, and Cys-61–Cys-81.

The protein belongs to the neurotoxin 25 family. F7 subfamily. As to expression, expressed by the venom gland.

It is found in the secreted. Functionally, putative ion channel inhibitor. The chain is Hainantoxin-XVIII-4 from Cyriopagopus hainanus (Chinese bird spider).